The primary structure comprises 954 residues: Glycine dehydrogenase (decarboxylating) (954 aa).

Lysine 704 is subject to N6-(pyridoxal phosphate)lysine.

The protein belongs to the GcvP family. As to quaternary structure, the glycine cleavage system is composed of four proteins: P, T, L and H. The cofactor is pyridoxal 5'-phosphate.

The catalysed reaction is N(6)-[(R)-lipoyl]-L-lysyl-[glycine-cleavage complex H protein] + glycine + H(+) = N(6)-[(R)-S(8)-aminomethyldihydrolipoyl]-L-lysyl-[glycine-cleavage complex H protein] + CO2. Its function is as follows. The glycine cleavage system catalyzes the degradation of glycine. The P protein binds the alpha-amino group of glycine through its pyridoxal phosphate cofactor; CO(2) is released and the remaining methylamine moiety is then transferred to the lipoamide cofactor of the H protein. This chain is Glycine dehydrogenase (decarboxylating), found in Vibrio parahaemolyticus serotype O3:K6 (strain RIMD 2210633).